Here is a 189-residue protein sequence, read N- to C-terminus: Selenoprotein S (189 aa).

A helical transmembrane segment spans residues 29–49; that stretch reads VVLSSYGWYILLGCILIYLLI. Residues 114–125 are compositionally biased toward basic and acidic residues; sequence IETWDRMKEGKS. The tract at residues 114-189 is disordered; that stretch reads IETWDRMKEG…RRGPSSGGUG (76 aa). Residues 136 to 147 are compositionally biased toward low complexity; it reads PSPSTSTSAATK. A compositionally biased stretch (basic and acidic residues) spans 148–157; that stretch reads PKQEKQERKT. Residue selenocysteine 188 is a non-standard amino acid, selenocysteine.

This sequence belongs to the selenoprotein S family.

The protein localises to the endoplasmic reticulum membrane. The protein resides in the cytoplasm. Involved in the degradation process of misfolded endoplasmic reticulum (ER) luminal proteins. Participates in the transfer of misfolded proteins from the ER to the cytosol, where they are destroyed by the proteasome in a ubiquitin-dependent manner. This Xenopus tropicalis (Western clawed frog) protein is Selenoprotein S (vimp).